The sequence spans 426 residues: Elongation factor Tu, mitochondrial (426 aa).

The N-terminal 27 residues, 1-27 (MFKNLAGSFRAVSRVAFKTRPSLVRSY), are a transit peptide targeting the mitochondrion. Residues 34 to 230 (KPHVNIGTIG…AVDEHIPTPT (197 aa)) form the tr-type G domain. The tract at residues 43 to 50 (GHVDHGKT) is G1. Residue 43-50 (GHVDHGKT) coordinates GTP. A G2 region spans residues 84-88 (GITIS). The segment at 105-108 (DCPG) is G3. GTP-binding positions include 105-109 (DCPGH) and 160-163 (NKVD). The segment at 160–163 (NKVD) is G4. The tract at residues 198–200 (SAL) is G5.

Belongs to the TRAFAC class translation factor GTPase superfamily. Classic translation factor GTPase family. EF-Tu/EF-1A subfamily.

The protein resides in the mitochondrion. It participates in protein biosynthesis; polypeptide chain elongation. Functionally, G-protein that, in its active GTP-bound form, binds to and delivers aminoacyl-tRNA to the A-site of ribosomes during protein biosynthesis. In the presence of a correct codon-anticodon match between the aminoacyl-tRNA and the A-site codon of the ribosome-bound mRNA, the ribosome acts as a GTPase activator and the GTP is hydrolyzed. The inactive GDP-bound form leaves the ribosome and must be recycled before binding another molecule of aminoacyl-tRNA. Required for mitochondrial protein biosynthesis and maintenance of mitochondrial DNA. This chain is Elongation factor Tu, mitochondrial (TUF1), found in Meyerozyma guilliermondii (strain ATCC 6260 / CBS 566 / DSM 6381 / JCM 1539 / NBRC 10279 / NRRL Y-324) (Yeast).